We begin with the raw amino-acid sequence, 294 residues long: 4-hydroxy-tetrahydrodipicolinate synthase (294 aa).

A pyruvate-binding site is contributed by Thr44. The Proton donor/acceptor role is filled by Tyr132. The Schiff-base intermediate with substrate role is filled by Lys160. Val202 contributes to the pyruvate binding site.

Belongs to the DapA family. Homotetramer; dimer of dimers.

The protein localises to the cytoplasm. It carries out the reaction L-aspartate 4-semialdehyde + pyruvate = (2S,4S)-4-hydroxy-2,3,4,5-tetrahydrodipicolinate + H2O + H(+). It functions in the pathway amino-acid biosynthesis; L-lysine biosynthesis via DAP pathway; (S)-tetrahydrodipicolinate from L-aspartate: step 3/4. Its function is as follows. Catalyzes the condensation of (S)-aspartate-beta-semialdehyde [(S)-ASA] and pyruvate to 4-hydroxy-tetrahydrodipicolinate (HTPA). In Leptospira borgpetersenii serovar Hardjo-bovis (strain JB197), this protein is 4-hydroxy-tetrahydrodipicolinate synthase.